Here is a 176-residue protein sequence, read N- to C-terminus: Large ribosomal subunit protein uL6 (176 aa).

The protein belongs to the universal ribosomal protein uL6 family. As to quaternary structure, part of the 50S ribosomal subunit.

This protein binds to the 23S rRNA, and is important in its secondary structure. It is located near the subunit interface in the base of the L7/L12 stalk, and near the tRNA binding site of the peptidyltransferase center. This is Large ribosomal subunit protein uL6 from Thiobacillus denitrificans (strain ATCC 25259 / T1).